A 521-amino-acid polypeptide reads, in one-letter code: GMP synthase [glutamine-hydrolyzing] (521 aa).

The region spanning 8–203 (KILILDFGAQ…VVDVCGCQTL (196 aa)) is the Glutamine amidotransferase type-1 domain. Cys-85 (nucleophile) is an active-site residue. Active-site residues include His-177 and Glu-179. Residues 204 to 396 (WTAANIIDDQ…LGLPRTMVYR (193 aa)) form the GMPS ATP-PPase domain. 231-237 (SGGVDSS) contacts ATP.

As to quaternary structure, homodimer.

The enzyme catalyses XMP + L-glutamine + ATP + H2O = GMP + L-glutamate + AMP + diphosphate + 2 H(+). It participates in purine metabolism; GMP biosynthesis; GMP from XMP (L-Gln route): step 1/1. Catalyzes the synthesis of GMP from XMP. The chain is GMP synthase [glutamine-hydrolyzing] from Stenotrophomonas maltophilia (strain K279a).